The following is a 1337-amino-acid chain: MAGDDLVFAVNGEKFEVLSVNPSTTLLEFLRSNTCFKSVKLSCGEGGCGACIVILSKYDPVLDQVEEYSINSCLTLLCSLNGCSITTSDGLGNTEKGFHPIHKRFAGFHASQCGFCTPGMCISLYSALSKAHNSQSSPDYLTALAAEKSIAGNLCRCTGYRPIADACKSFASDVDIEDLGFNSFWRKGESREEMLKKLPPYNPEKDLITFPDFLKEKIKCQHNVLDQTRYHWSTPGSVAELQEILATTNPGKDRGLIKLVVGNTGTGYYKEEKQYGRYIDISHIPEMSMIKKDDREIEIGAVVTISKVIDALMEENTSAYVFKKIGVHMEKVANHFIRNSGSIGGNLVMAQSKSFPSDITTLLLAADASVHMINAGRHEKLRMGEYLVSPPILDTKTVLLKVHIPRWIASSTTGLLFETYRAALRPIGSALPYINAAFLAVVSHDASSSGIIVDKCRLAFGSYGGYHSIRAREVEDFLTGKILSHSVLYEAVRLLKGIIVPSIDTSYSEYKKSLAVGFLFDFLYPLIESGSWDSEGKHIDGHIDPTICLPLLSSAQQVFESKEYHPVGEAIIKFGAEMQASGEAVYVDDIPSLPHCLHGAFIYSTKPLAWIKSVGFSGNVTPIGVLAVITFKDIPEVGQNIGYITMFGTGLLFADEVTISAGQIIALVVADTQKHADMAAHLAVVEYDSRNIGTPVLSVEDAVKRSSLFEVPPEYQPEPVGDISKGMAEADRKIRSVELRLGSQYFFYMETQTALALPDEDNCLVVYSSTQAPEFTQTVIATCLGIPEHNVRVITRRVGGGFGGKAIKSMPVATACALAAKKMQRPVRIYVNRKTDMIMAGGRHPLKITYSVGFRSDGKLTALDLNLFIDAGSDVDVSLVMPQNIMNSLRKYDWGALSFDIKVCKTNLPSRTSLRAPGEVQGSYIAESIIENVASSLKMDVDVVRRINLHTYESLRKFYKQAAGEPDEYTLPLLWDKLEVSADFRRRAESVKEFNRCNIWRKRGISRVPIIHLVIHRPTPGKVSILNDGSVAVEVAGIEVGQGLWTKVQQMVAYGLGMIKCEGSDDLLERIRLLQTDTLSMSQSSYTAGSTTSENCCEAVRLCCGILVERLRPTMNQILENARSVTWDMLIQQANAQSVDLSARTFYKPESSSAEYLNYGVGASEVEVDLVTGRTEIIRSDIIYDCGKSLNPAVDLGQIEGAFVQGIGFFMYEEYTTNENGLVNEEGTWDYKIPTIDTIPKQFNVQILNSGHHKNRVLSSKASGEPPLLVAASVHCATRSAIREARKQYLSWNCIDDDHRERCDLGFELPVPATMPVVKQLCGLESIEKYLEWKTYP.

Residues 4-91 (DDLVFAVNGE…GCSITTSDGL (88 aa)) enclose the 2Fe-2S ferredoxin-type domain. Residues Cys-43, Cys-48, Cys-51, Cys-73, Cys-113, Cys-116, Cys-155, and Cys-157 each coordinate [2Fe-2S] cluster. The 185-residue stretch at 225–409 (LDQTRYHWST…LKVHIPRWIA (185 aa)) folds into the FAD-binding PCMH-type domain. FAD is bound by residues 259 to 266 (LVVGNTGT), 342 to 346 (SIGGN), Asp-358, and Leu-399. Positions 771, 802, and 915 each coordinate Mo-molybdopterin. The active-site Proton acceptor is the Glu-1265.

It belongs to the xanthine dehydrogenase family. In terms of assembly, aldehyde oxidases (AO) are homodimers and heterodimers of AO subunits. The cofactor is [2Fe-2S] cluster. FAD serves as cofactor. Mo-molybdopterin is required as a cofactor. In terms of tissue distribution, transcripts expressed at high levels in developing siliques and at low levels in dry seeds.

Its subcellular location is the cytoplasm. The catalysed reaction is indole-3-acetaldehyde + O2 + H2O = (indol-3-yl)acetate + H2O2 + H(+). The enzyme catalyses an aldehyde + O2 + H2O = a carboxylate + H2O2 + H(+). It catalyses the reaction benzaldehyde + O2 + H2O = benzoate + H2O2 + H(+). It carries out the reaction hexanal + O2 + H2O = hexanoate + H2O2 + H(+). The catalysed reaction is 1-naphthaldehyde + O2 + H2O = 1-naphthoate + H2O2 + H(+). The enzyme catalyses vanillin + O2 + H2O = vanillate + H2O2 + H(+). It catalyses the reaction malonaldehyde + O2 + H2O = 3-oxopropanoate + H2O2 + H(+). It carries out the reaction citral + O2 + H2O = 3,7-dimethylocta-2,6-dienoate + H2O2 + H(+). The catalysed reaction is acrolein + O2 + H2O = acrylate + H2O2 + H(+). The enzyme catalyses (E)-4-hydroxynon-2-enal + O2 + H2O = (E)-4-hydroxynon-2-enoate + H2O2 + H(+). It catalyses the reaction (E)-cinnamaldehyde + O2 + H2O = (E)-cinnamate + H2O2 + H(+). It carries out the reaction indole-3-carbaldehyde + O2 + H2O = indole-3-carboxylate + H2O2 + H(+). The catalysed reaction is propanal + O2 + H2O = propanoate + H2O2 + H(+). The enzyme catalyses dodecanal + O2 + H2O = dodecanoate + H2O2 + H(+). It catalyses the reaction salicylaldehyde + O2 + H2O = salicylate + H2O2 + H(+). Its activity is regulated as follows. Inhibited by Cu(2+). Functionally, aldehyde oxidase with a broad substrate specificity. Involved in the accumulation of benzoic acid (BA) in siliques. Delays and protects siliques from senescence by catalyzing aldehyde detoxification in siliques. Catalyzes the oxidation of an array of aromatic and aliphatic aldehydes, including vanillin and the reactive carbonyl species (RCS) acrolein, 4-hydroxyl-2-nonenal (HNE), and malondialdehyde (MDA). The sequence is that of Aldehyde oxidase 4 from Arabidopsis thaliana (Mouse-ear cress).